Here is a 100-residue protein sequence, read N- to C-terminus: MGALTKAEMAERLYEELGLNKREAKELVELFFEEIRHALEDNEQVKLSGFGNFDLRDKRQRPGRNPKTGEEIPITARRVVTFRPGQKLKARVEAYAGTKP.

Positions 53–72 (FDLRDKRQRPGRNPKTGEEI) are disordered.

The protein belongs to the bacterial histone-like protein family. As to quaternary structure, heterodimer of an alpha and a beta chain.

Its function is as follows. This protein is one of the two subunits of integration host factor, a specific DNA-binding protein that functions in genetic recombination as well as in transcriptional and translational control. The sequence is that of Integration host factor subunit alpha from Pseudomonas entomophila (strain L48).